The primary structure comprises 196 residues: MSHALDAAALDQLFRTARTQNAFLDKPVPASLLQELYDLVKWGPTAANTTPARFVFVTSKEAKAKLAPALSEGNHDKTMAAPVTAIIGFDLDFHEKLPYLFPHTDAKAWFDGPQEGRHEAALRNGSLQGAYLILAARALGLDAGPMSGFDPAKVDEAFFAGTSIKSNFLVNLGYGDPAGLFPRLPRLSFDEAARIA.

This sequence belongs to the nitroreductase family. HadB/RutE subfamily. The cofactor is FMN.

This Stenotrophomonas maltophilia (strain K279a) protein is Putative NADH dehydrogenase/NAD(P)H nitroreductase Smlt0482.